Reading from the N-terminus, the 132-residue chain is Small ribosomal subunit protein uS8 (132 aa).

It belongs to the universal ribosomal protein uS8 family. Part of the 30S ribosomal subunit. Contacts proteins S5 and S12.

Its function is as follows. One of the primary rRNA binding proteins, it binds directly to 16S rRNA central domain where it helps coordinate assembly of the platform of the 30S subunit. This Bacillus subtilis (strain 168) protein is Small ribosomal subunit protein uS8.